Consider the following 339-residue polypeptide: Glycerol-3-phosphate dehydrogenase [NAD(P)+] (339 aa).

Positions 15, 16, 36, and 110 each coordinate NADPH. 3 residues coordinate sn-glycerol 3-phosphate: lysine 110, glycine 139, and threonine 141. Alanine 143 is a binding site for NADPH. Positions 195, 248, 258, 259, and 260 each coordinate sn-glycerol 3-phosphate. The active-site Proton acceptor is the lysine 195. Residue arginine 259 coordinates NADPH. Valine 283 and glutamate 285 together coordinate NADPH.

It belongs to the NAD-dependent glycerol-3-phosphate dehydrogenase family.

It is found in the cytoplasm. It carries out the reaction sn-glycerol 3-phosphate + NAD(+) = dihydroxyacetone phosphate + NADH + H(+). The catalysed reaction is sn-glycerol 3-phosphate + NADP(+) = dihydroxyacetone phosphate + NADPH + H(+). It participates in membrane lipid metabolism; glycerophospholipid metabolism. In terms of biological role, catalyzes the reduction of the glycolytic intermediate dihydroxyacetone phosphate (DHAP) to sn-glycerol 3-phosphate (G3P), the key precursor for phospholipid synthesis. In Escherichia fergusonii (strain ATCC 35469 / DSM 13698 / CCUG 18766 / IAM 14443 / JCM 21226 / LMG 7866 / NBRC 102419 / NCTC 12128 / CDC 0568-73), this protein is Glycerol-3-phosphate dehydrogenase [NAD(P)+].